The sequence spans 242 residues: Endoplasmic reticulum membrane protein complex subunit 7 (242 aa).

A signal peptide spans 1–23 (MAAALWGFFPVLLLLLLSGDVQS). Topologically, residues 24-159 (SEVPGAAAEG…IKRESWGWTD (136 aa)) are lumenal. A helical membrane pass occupies residues 160 to 180 (FLMNPMVMMMVLPLLIFVLLP). Over 181 to 242 (KVVNTSDPDM…TGKSGAGKRR (62 aa)) the chain is Cytoplasmic. The segment at 217–242 (LFSSKSSGKSSSGSSKTGKSGAGKRR) is disordered. The span at 219–235 (SSKSSGKSSSGSSKTGK) shows a compositional bias: low complexity.

It belongs to the EMC7 family. In terms of assembly, component of the ER membrane protein complex (EMC).

It localises to the endoplasmic reticulum membrane. Part of the endoplasmic reticulum membrane protein complex (EMC) that enables the energy-independent insertion into endoplasmic reticulum membranes of newly synthesized membrane proteins. Preferentially accommodates proteins with transmembrane domains that are weakly hydrophobic or contain destabilizing features such as charged and aromatic residues. Involved in the cotranslational insertion of multi-pass membrane proteins in which stop-transfer membrane-anchor sequences become ER membrane spanning helices. It is also required for the post-translational insertion of tail-anchored/TA proteins in endoplasmic reticulum membranes. By mediating the proper cotranslational insertion of N-terminal transmembrane domains in an N-exo topology, with translocated N-terminus in the lumen of the ER, controls the topology of multi-pass membrane proteins like the G protein-coupled receptors. By regulating the insertion of various proteins in membranes, it is indirectly involved in many cellular processes. This chain is Endoplasmic reticulum membrane protein complex subunit 7 (EMC7), found in Homo sapiens (Human).